A 322-amino-acid polypeptide reads, in one-letter code: D-alanine--D-alanine ligase (322 aa).

One can recognise an ATP-grasp domain in the interval 108–311 (KEFYYNAELP…FPSLLDTLIE (204 aa)). 136–192 (IEDLGLPLVVKPACAGSSIGISLAHTEEELLAGINHARDCSAGAIMVEQFIKGRELT) is a binding site for ATP. Mg(2+) is bound by residues D265, E278, and N280.

It belongs to the D-alanine--D-alanine ligase family. The cofactor is Mg(2+). Requires Mn(2+) as cofactor.

The protein localises to the cytoplasm. It catalyses the reaction 2 D-alanine + ATP = D-alanyl-D-alanine + ADP + phosphate + H(+). It functions in the pathway cell wall biogenesis; peptidoglycan biosynthesis. Functionally, cell wall formation. In Desulfotalea psychrophila (strain LSv54 / DSM 12343), this protein is D-alanine--D-alanine ligase.